An 88-amino-acid chain; its full sequence is UPF0297 protein GK2555 (88 aa).

This sequence belongs to the UPF0297 family.

The chain is UPF0297 protein GK2555 from Geobacillus kaustophilus (strain HTA426).